The primary structure comprises 379 residues: S-adenosylmethionine decarboxylase proenzyme (379 aa).

Active-site residues include Glu30 and Glu33. Ser96 acts as the Schiff-base intermediate with substrate; via pyruvic acid in catalysis. Pyruvic acid (Ser); by autocatalysis is present on Ser96. Cys110 acts as the Proton donor; for catalytic activity in catalysis. Residues Ser254 and His267 each act as proton acceptor; for processing activity in the active site.

This sequence belongs to the eukaryotic AdoMetDC family. In terms of assembly, heterotetramer of two alpha and two beta chains. Pyruvate serves as cofactor. Is synthesized initially as an inactive proenzyme. Formation of the active enzyme involves a self-maturation process in which the active site pyruvoyl group is generated from an internal serine residue via an autocatalytic post-translational modification. Two non-identical subunits are generated from the proenzyme in this reaction, and the pyruvate is formed at the N-terminus of the alpha chain, which is derived from the carboxyl end of the proenzyme. The post-translation cleavage follows an unusual pathway, termed non-hydrolytic serinolysis, in which the side chain hydroxyl group of the serine supplies its oxygen atom to form the C-terminus of the beta chain, while the remainder of the serine residue undergoes an oxidative deamination to produce ammonia and the pyruvoyl group blocking the N-terminus of the alpha chain.

It catalyses the reaction S-adenosyl-L-methionine + H(+) = S-adenosyl 3-(methylsulfanyl)propylamine + CO2. It functions in the pathway amine and polyamine biosynthesis; S-adenosylmethioninamine biosynthesis; S-adenosylmethioninamine from S-adenosyl-L-methionine: step 1/1. In terms of biological role, S-adenosylmethionine decarboxylase is essential for the biosynthesis of spermine and spermidine. The alpha subunit contains the active site. This Dictyostelium discoideum (Social amoeba) protein is S-adenosylmethionine decarboxylase proenzyme (amd1).